The sequence spans 220 residues: Charged multivesicular body protein 4b (220 aa).

Disordered regions lie at residues methionine 1 to glutamate 22 and glutamate 180 to asparagine 220. 2 coiled-coil regions span residues glutamine 21 to glutamate 88 and isoleucine 123 to isoleucine 181.

Belongs to the SNF7 family. In terms of assembly, probable core component of the endosomal sorting required for transport complex III (ESCRT-III). ESCRT-III components are thought to multimerize to form a flat lattice on the perimeter membrane of the endosome.

It localises to the cytoplasm. Its subcellular location is the cytosol. The protein localises to the late endosome membrane. The protein resides in the midbody. Functionally, probable core component of the endosomal sorting required for transport complex III (ESCRT-III) which is involved in multivesicular bodies (MVBs) formation and sorting of endosomal cargo proteins into MVBs. MVBs contain intraluminal vesicles (ILVs) that are generated by invagination and scission from the limiting membrane of the endosome and mostly are delivered to lysosomes enabling degradation of membrane proteins, such as stimulated growth factor receptors, lysosomal enzymes and lipids. The sequence is that of Charged multivesicular body protein 4b (chmp4b) from Danio rerio (Zebrafish).